The chain runs to 475 residues: Ribulose bisphosphate carboxylase large chain (475 aa).

A propeptide spanning residues 1–2 (MS) is cleaved from the precursor. Proline 3 bears the N-acetylproline mark. Position 14 is an N6,N6,N6-trimethyllysine (lysine 14). The substrate site is built by asparagine 123 and threonine 173. The Proton acceptor role is filled by lysine 175. Lysine 177 serves as a coordination point for substrate. 3 residues coordinate Mg(2+): lysine 201, aspartate 203, and glutamate 204. Lysine 201 is subject to N6-carboxylysine. Histidine 294 functions as the Proton acceptor in the catalytic mechanism. Substrate is bound by residues arginine 295, histidine 327, and serine 379.

This sequence belongs to the RuBisCO large chain family. Type I subfamily. Heterohexadecamer of 8 large chains and 8 small chains; disulfide-linked. The disulfide link is formed within the large subunit homodimers. Mg(2+) serves as cofactor. Post-translationally, the disulfide bond which can form in the large chain dimeric partners within the hexadecamer appears to be associated with oxidative stress and protein turnover.

It localises to the plastid. The protein resides in the chloroplast. It catalyses the reaction 2 (2R)-3-phosphoglycerate + 2 H(+) = D-ribulose 1,5-bisphosphate + CO2 + H2O. The enzyme catalyses D-ribulose 1,5-bisphosphate + O2 = 2-phosphoglycolate + (2R)-3-phosphoglycerate + 2 H(+). Functionally, ruBisCO catalyzes two reactions: the carboxylation of D-ribulose 1,5-bisphosphate, the primary event in carbon dioxide fixation, as well as the oxidative fragmentation of the pentose substrate in the photorespiration process. Both reactions occur simultaneously and in competition at the same active site. This is Ribulose bisphosphate carboxylase large chain from Pinus pinea (Italian stone pine).